The sequence spans 416 residues: Heat shock protein DDB_G0280215 (416 aa).

A sHSP domain is found at 37–150; that stretch reads SMDWGWKPRM…SQHISLFGRE (114 aa). A disordered region spans residues 216 to 235; it reads ETKERERRIRDTKGETEKKK.

Belongs to the small heat shock protein (HSP20) family.

The sequence is that of Heat shock protein DDB_G0280215 from Dictyostelium discoideum (Social amoeba).